The primary structure comprises 919 residues: Coiled-coil domain-containing protein 66 (919 aa).

Disordered stretches follow at residues 145–166, 456–505, 724–744, and 762–816; these read KEETSQDSLHLNNTSNQPKDEN, ERDR…RERE, ERNNPGHLSQNRGTSPVLPSP, and LKSD…EPSH. Residues 150–161 show a composition bias toward polar residues; sequence QDSLHLNNTSNQ. A coiled-coil region spans residues 467-558; that stretch reads HQKAITAQVE…EQRIRELAQK (92 aa). The tract at residues 570-919 is mediates localization to cilia, centrosomes and spindle microtubules and the interaction with PCM1, CEP290, CEP104 and CSPP1; it reads GGYGLDDVSG…NQEENFNSSF (350 aa).

As to quaternary structure, homodimer; disulfide-linked. Interacts with CEP290. Interacts with PCM1. Interacts with ARMC9, TOGARAM1, CSPP1 and CEP104. Interacts with CDK5RAP2, CEP152, CEP192, TBG1 and PRC1. Expressed in retina and blood. Expressed in retina, mainly in photoreceptors but also in outer plexiform and ganglion cell layers (at protein level).

It is found in the cytoplasm. The protein localises to the cytoskeleton. The protein resides in the microtubule organizing center. It localises to the centrosome. Its subcellular location is the centriolar satellite. It is found in the cell projection. The protein localises to the cilium. The protein resides in the cilium basal body. It localises to the cilium axoneme. Its subcellular location is the photoreceptor inner segment. It is found in the photoreceptor outer segment. Microtubule-binding protein required for ciliogenesis. May function in ciliogenesis by mediating the transport of proteins like BBS4 to the cilium, but also through the organization of the centriolar satellites. Required for the assembly of signaling-competent cilia with proper structure and length. Mediates this function in part by regulating transition zone assembly and basal body recruitment of the IFT-B complex. Cooperates with the ciliopathy proteins CSPP1 and CEP104 during cilium length regulation. Plays two important roles during cell division. First, is required for mitotic progression via regulation of spindle assembly, organization and orientation, levels of spindle microtubules (MTs), kinetochore-fiber integrity, and chromosome alignment. Second, functions during cytokinesis in part by regulating assembly and organization of central spindle and midbody MTs. Plays a role in retina morphogenesis and/or homeostasis. The chain is Coiled-coil domain-containing protein 66 (CCDC66) from Canis lupus familiaris (Dog).